We begin with the raw amino-acid sequence, 198 residues long: Probable GTP-binding protein EngB (198 aa).

One can recognise an EngB-type G domain in the interval 21-195 (NFSEVAFLGR…EDIIINQTLG (175 aa)). Residues 29–36 (GRSNVGKS), 56–60 (GKTQL), 81–84 (DLPG), 151–154 (TKCD), and 174–176 (VSN) contribute to the GTP site. Mg(2+)-binding residues include serine 36 and threonine 58.

The protein belongs to the TRAFAC class TrmE-Era-EngA-EngB-Septin-like GTPase superfamily. EngB GTPase family. It depends on Mg(2+) as a cofactor.

Its function is as follows. Necessary for normal cell division and for the maintenance of normal septation. In Campylobacter jejuni subsp. jejuni serotype O:2 (strain ATCC 700819 / NCTC 11168), this protein is Probable GTP-binding protein EngB.